The chain runs to 133 residues: Ribosomal RNA large subunit methyltransferase H 1 (133 aa).

S-adenosyl-L-methionine contacts are provided by residues Ile-55, Gly-89, and 101–106; that span reads ISPMEM.

This sequence belongs to the RNA methyltransferase RlmH family. In terms of assembly, homodimer.

It is found in the cytoplasm. The catalysed reaction is pseudouridine(1915) in 23S rRNA + S-adenosyl-L-methionine = N(3)-methylpseudouridine(1915) in 23S rRNA + S-adenosyl-L-homocysteine + H(+). In terms of biological role, specifically methylates the pseudouridine at position 1915 (m3Psi1915) in 23S rRNA. In Thermoanaerobacter sp. (strain X514), this protein is Ribosomal RNA large subunit methyltransferase H 1.